The primary structure comprises 619 residues: Xyloglucan galactosyltransferase MUR3 (619 aa).

The disordered stretch occupies residues 1–26 (MFPRVSMRRRSAEVSPTEPMEKGNGK). The Cytoplasmic segment spans residues 1–33 (MFPRVSMRRRSAEVSPTEPMEKGNGKNQTNRIC). Residues 34-54 (LLVALSLFFWALLLYFHFVVL) traverse the membrane as a helical; Signal-anchor for type II membrane protein segment. Residues 55 to 619 (GTSNIDKQLQ…WKSEQRDKTQ (565 aa)) are Lumenal-facing. 7 N-linked (GlcNAc...) asparagine glycosylation sites follow: asparagine 116, asparagine 146, asparagine 231, asparagine 257, asparagine 319, asparagine 465, and asparagine 482. The tract at residues 576–619 (HVWDPFFSKPKPGEDGSSDGNGGTTISADAAKNSWKSEQRDKTQ) is disordered. Positions 610–619 (WKSEQRDKTQ) are enriched in basic and acidic residues.

The protein belongs to the glycosyltransferase 47 family. As to quaternary structure, interacts with CSLC4 and FUT1. In terms of tissue distribution, ubiquitous.

It localises to the golgi apparatus. Its subcellular location is the golgi stack membrane. The protein localises to the golgi apparatus membrane. Its function is as follows. Involved in the attachment of the Gal residue on the third xylosyl unit within the XXXG core structure of xyloglucan, the principal glycan that interlaces the cellulose microfibrils in plant cell wall. Associates with other xyloglucan-synthesizing enzymes to form multiprotein complexes for xyloglucan synthesis in the Golgi. Interacts with actin and is required for the proper endomembrane organization and for the cell elongation. Not involved in the trafficking from the endoplasmic reticulum to the vacuoles. Involved in salt stress tolerance. Participates in the control of the expression of genes encoding for proteins involved in reactive oxygen species (ROS) detoxification under salt stress. May contribute to the maintenance of the proper organization of actin microfilaments during salt stress-induced ROS production. This chain is Xyloglucan galactosyltransferase MUR3, found in Arabidopsis thaliana (Mouse-ear cress).